The following is a 497-amino-acid chain: UDP-N-acetylmuramoyl-L-alanyl-D-glutamate--2,6-diaminopimelate ligase (497 aa).

Position 33 (serine 33) interacts with UDP-N-acetyl-alpha-D-muramoyl-L-alanyl-D-glutamate. Residue 119–125 coordinates ATP; the sequence is GTNGKTT. UDP-N-acetyl-alpha-D-muramoyl-L-alanyl-D-glutamate contacts are provided by residues 161–162, serine 188, glutamine 194, and arginine 196; that span reads TT. The residue at position 228 (lysine 228) is an N6-carboxylysine. Residues arginine 390, 414–417, glycine 465, and glutamate 469 contribute to the meso-2,6-diaminopimelate site; that span reads DNPR. Positions 414–417 match the Meso-diaminopimelate recognition motif motif; the sequence is DNPR.

Belongs to the MurCDEF family. MurE subfamily. The cofactor is Mg(2+). In terms of processing, carboxylation is probably crucial for Mg(2+) binding and, consequently, for the gamma-phosphate positioning of ATP.

It localises to the cytoplasm. The catalysed reaction is UDP-N-acetyl-alpha-D-muramoyl-L-alanyl-D-glutamate + meso-2,6-diaminopimelate + ATP = UDP-N-acetyl-alpha-D-muramoyl-L-alanyl-gamma-D-glutamyl-meso-2,6-diaminopimelate + ADP + phosphate + H(+). The protein operates within cell wall biogenesis; peptidoglycan biosynthesis. Catalyzes the addition of meso-diaminopimelic acid to the nucleotide precursor UDP-N-acetylmuramoyl-L-alanyl-D-glutamate (UMAG) in the biosynthesis of bacterial cell-wall peptidoglycan. This Synechococcus elongatus (strain ATCC 33912 / PCC 7942 / FACHB-805) (Anacystis nidulans R2) protein is UDP-N-acetylmuramoyl-L-alanyl-D-glutamate--2,6-diaminopimelate ligase.